Consider the following 98-residue polypeptide: Integration host factor subunit alpha (98 aa).

The segment at 52 to 73 (FDLRQKSERPGRNPKTGEDIPI) is disordered. Over residues 54-73 (LRQKSERPGRNPKTGEDIPI) the composition is skewed to basic and acidic residues.

The protein belongs to the bacterial histone-like protein family. In terms of assembly, heterodimer of an alpha and a beta chain.

This protein is one of the two subunits of integration host factor, a specific DNA-binding protein that functions in genetic recombination as well as in transcriptional and translational control. The chain is Integration host factor subunit alpha from Pseudoalteromonas atlantica (strain T6c / ATCC BAA-1087).